The sequence spans 381 residues: cAMP-dependent protein kinase type I-beta regulatory subunit (381 aa).

The segment at Ala2–Val136 is dimerization and phosphorylation. Ser3 bears the Phosphoserine mark. Tyr21 bears the 3'-nitrotyrosine mark. Residues Ala67–Gly98 are disordered. A phosphoserine mark is found at Ser77 and Ser83. Position 85 is a phosphothreonine (Thr85). The Pseudophosphorylation motif motif lies at Arg96–Val100. The residue at position 97 (Arg97) is an Omega-N-methylarginine. 3',5'-cyclic AMP-binding positions include Leu137–Ser254, Glu202, Arg211, Ile255–Val381, Glu326, and Arg335.

This sequence belongs to the cAMP-dependent kinase regulatory chain family. In terms of assembly, the inactive holoenzyme is composed of two regulatory chains and two catalytic chains. Activation by cAMP releases the two active catalytic monomers and the regulatory dimer. Interacts with PRKX; regulates this cAMP-dependent protein kinase. Interacts with C2orf88/smAKAP; this interaction may target PRKAR1B to the plasma membrane. The pseudophosphorylation site binds to the substrate-binding region of the catalytic chain, resulting in the inhibition of its activity. In terms of tissue distribution, four types of regulatory chains are found: I-alpha, I-beta, II-alpha, and II-beta. Their expression varies among tissues and is in some cases constitutive and in others inducible.

The protein localises to the cell membrane. Its function is as follows. Regulatory subunit of the cAMP-dependent protein kinases involved in cAMP signaling in cells. The polypeptide is cAMP-dependent protein kinase type I-beta regulatory subunit (PRKAR1B) (Homo sapiens (Human)).